A 231-amino-acid polypeptide reads, in one-letter code: Adenosylcobinamide-GDP ribazoletransferase (231 aa).

The next 6 helical transmembrane spans lie at 24–44 (LWAFPLVALVSSALPTLILYL), 46–66 (LPLSNLLAVLALYWTIGLLHL), 96–116 (IAGLFAVVIVLLLQVYSLQLL), 159–176 (LALGTLLYVLLGLSVVLF), 181–198 (LAGILGLLFGVHIIRISL), and 209–229 (LGATAEITRAGTLVVMALVWW).

The protein belongs to the CobS family. Mg(2+) serves as cofactor.

Its subcellular location is the cell membrane. The enzyme catalyses alpha-ribazole + adenosylcob(III)inamide-GDP = adenosylcob(III)alamin + GMP + H(+). The catalysed reaction is alpha-ribazole 5'-phosphate + adenosylcob(III)inamide-GDP = adenosylcob(III)alamin 5'-phosphate + GMP + H(+). The protein operates within cofactor biosynthesis; adenosylcobalamin biosynthesis; adenosylcobalamin from cob(II)yrinate a,c-diamide: step 7/7. Functionally, joins adenosylcobinamide-GDP and alpha-ribazole to generate adenosylcobalamin (Ado-cobalamin). Also synthesizes adenosylcobalamin 5'-phosphate from adenosylcobinamide-GDP and alpha-ribazole 5'-phosphate. This chain is Adenosylcobinamide-GDP ribazoletransferase, found in Thermococcus kodakarensis (strain ATCC BAA-918 / JCM 12380 / KOD1) (Pyrococcus kodakaraensis (strain KOD1)).